A 185-amino-acid polypeptide reads, in one-letter code: UPF0200 protein Mevan_0592 (185 aa).

8–15 is an ATP binding site; sequence GMPGSGKS.

The protein belongs to the UPF0200 family.

The protein is UPF0200 protein Mevan_0592 of Methanococcus vannielii (strain ATCC 35089 / DSM 1224 / JCM 13029 / OCM 148 / SB).